Reading from the N-terminus, the 372-residue chain is N-methyl-L-tryptophan oxidase (372 aa).

Residue 4-34 participates in FAD binding; that stretch reads DLIIIGSGSVGAAAGYYATRAGLKVLMTDAH. S-8alpha-FAD cysteine is present on Cys307.

This sequence belongs to the MSOX/MTOX family. MTOX subfamily. In terms of assembly, monomer. FAD is required as a cofactor.

It catalyses the reaction N(alpha)-methyl-L-tryptophan + O2 + H2O = L-tryptophan + formaldehyde + H2O2. Catalyzes the oxidative demethylation of N-methyl-L-tryptophan. The protein is N-methyl-L-tryptophan oxidase of Salmonella typhi.